The chain runs to 464 residues: L-cystine uptake protein TcyP (464 aa).

Transmembrane regions (helical) follow at residues 3 to 23 (TLLV…LYYM), 34 to 54 (VFTA…IYEP), 73 to 93 (YVKL…ISAF), 107 to 127 (GLII…GIAA), 184 to 204 (PTST…FIGV), 225 to 245 (IVMR…LALM), 263 to 283 (FVLA…LLIA), 347 to 367 (AGIY…IDPL), 371 to 391 (FILT…GVGG), and 395 to 415 (FAAL…ALVI).

Belongs to the dicarboxylate/amino acid:cation symporter (DAACS) (TC 2.A.23) family.

It is found in the membrane. In terms of biological role, mediates uptake of L-cystine, the oxidized form of L-cysteine. The chain is L-cystine uptake protein TcyP from Bacillus thuringiensis (strain Al Hakam).